The following is a 596-amino-acid chain: Aspartic proteinase yapsin-7 (596 aa).

A signal peptide spans 1 to 25 (MTCLILWYLWLISTFQLEFATASTA). Asn26 and Asn59 each carry an N-linked (GlcNAc...) asparagine glycan. Topologically, residues 26-575 (NTTTTAKSGT…SPYTFNKDPA (550 aa)) are lumenal. Residues 56–440 (YYVNSTFGTP…DLEDNTIAIA (385 aa)) form the Peptidase A1 domain. Asp74 is a catalytic residue. Residues Asn106, Asn131, Asn140, Asn143, Asn148, Asn175, and Asn308 are each glycosylated (N-linked (GlcNAc...) asparagine). Asp321 is a catalytic residue. N-linked (GlcNAc...) asparagine glycans are attached at residues Asn391, Asn455, Asn478, Asn484, Asn549, and Asn552. A helical membrane pass occupies residues 576–596 (GHVTRIASLLLLSIFSILIVL).

This sequence belongs to the peptidase A1 family.

The protein localises to the cytoplasm. Its subcellular location is the endoplasmic reticulum membrane. This is Aspartic proteinase yapsin-7 (YPS7) from Saccharomyces cerevisiae (strain ATCC 204508 / S288c) (Baker's yeast).